A 378-amino-acid polypeptide reads, in one-letter code: Putative odorant receptor 71a (378 aa).

Topologically, residues 1–37 (MDYDRIRPVRFLTGVLKWWRLWPRKESVSTPDWTNWQ) are cytoplasmic. A helical transmembrane segment spans residues 38–58 (AYALHVPFTFLFVLLLWLEAI). At 59 to 66 (KSRDIQHT) the chain is on the extracellular side. Residues 67–87 (ADVLLICLTTTALGGKVINIW) form a helical membrane-spanning segment. The Cytoplasmic segment spans residues 88–127 (KYAHVAQGILSEWSTWDLFELRSKQEVDMWRFEHRRFNRV). Residues 128 to 148 (FMFYCLCSAGVIPFIVIQPLF) traverse the membrane as a helical segment. Residues 149–166 (DIPNRLPFWMWTPFDWQQ) lie on the Extracellular side of the membrane. The chain crosses the membrane as a helical span at residues 167 to 187 (PVLFWYAFIYQATTIPIACAC). The Cytoplasmic segment spans residues 188–255 (NVTMDAVNWY…IFISKSTFTQ (68 aa)). The helical transmembrane segment at 256-276 (ILVSSLIICFTIYSMQMSPVL) threads the bilayer. Over 277–280 (QDLP) the chain is Extracellular. Residues 281–301 (GFAAMMQYLVAMIMQVMLPTI) form a helical membrane-spanning segment. The Cytoplasmic segment spans residues 302–343 (YGNAVIDSANMLTDSMYNSDWPDMNCRMRRLVLMFMVYLNRP). The helical transmembrane segment at 344–364 (VTLKAGGFFHIGLPLFTKTMN) threads the bilayer. At 365 to 378 (QAYSLLALLLNMNQ) the chain is on the extracellular side.

The protein belongs to the insect chemoreceptor superfamily. Heteromeric odorant receptor channel (TC 1.A.69) family. Or2a subfamily. As to quaternary structure, interacts with Orco. Complexes exist early in the endomembrane system in olfactory sensory neurons (OSNs), coupling these complexes to the conserved ciliary trafficking pathway. In terms of tissue distribution, expressed in olfactory sensory neurons in the maxillary palp.

It is found in the cell membrane. In terms of biological role, odorant receptor which mediates acceptance or avoidance behavior, depending on its substrates. The odorant receptor repertoire encodes a large collection of odor stimuli that vary widely in identity, intensity, and duration. May form a complex with Orco to form odorant-sensing units, providing sensitive and prolonged odorant signaling and calcium permeability. This chain is Putative odorant receptor 71a (Or71a), found in Drosophila melanogaster (Fruit fly).